The primary structure comprises 644 residues: MFQDNPLLAQLKQQLHSQTPRAEGVVKATEKGFGFLEVDAQKSYFIPPPQMKKVMHGDRIVAVIHTEKERESAEPEELIEPFLTRFVGKVQGKNDRLSIVPDHPLLKDAIPCRAARGVQHEFKEGDWAVAEMRRHPLKGDRSFYADLTQYITFADDHFVPWWVTLARHNLEKEAPNGVATEMLDEGLERQDLTALNFVTIDSASTEDMDDALYAEELADGRLQLTVAIADPTAWIAEGSKLDNAAKIRAFTNYLPGFNIPMLPRELSDDLCSLRANEVRPALACRMIIAADGTIDDDIAFFAATIESKAKLAYDNVSDWLENNGTWQPDNEGIAQQIRLLHRICLSRSEWRHHHALVFKDRPDYRFVLGEKGEVLDIVAEPRRIANRIVEESMIAANLCAARVLRDKLGFGIYNVHTGFDPANADALAALLKTHGLHVDAEEVLTLEGFCKLRRELDAQPSGFLDSRIRRFQSFAEISTEPGPHFGLGLEAYATWTSPIRKYGDMINHRLLKAVIKGEAIARPQEDITQQMAERRRLNRMAERDVGDWLYARFLNDKAGTNTRFAAEIIDVSRGGMRVRLVDNGAIAFIPAPFLHAVRDELVCSQENGTVQIKGETVYKVTDVIDVTIAEVRMETRSIIARPAA.

Residues 189 to 516 (RQDLTALNFV…NHRLLKAVIK (328 aa)) enclose the RNB domain. In terms of domain architecture, S1 motif spans 561 to 643 (NTRFAAEIID…ETRSIIARPA (83 aa)).

It belongs to the RNR ribonuclease family. RNase II subfamily.

It is found in the cytoplasm. The enzyme catalyses Exonucleolytic cleavage in the 3'- to 5'-direction to yield nucleoside 5'-phosphates.. Involved in mRNA degradation. Hydrolyzes single-stranded polyribonucleotides processively in the 3' to 5' direction. The sequence is that of Exoribonuclease 2 from Salmonella agona (strain SL483).